The chain runs to 475 residues: Phosphoethanolamine N-methyltransferase 1 (475 aa).

The protein belongs to the class I-like SAM-binding methyltransferase superfamily.

The enzyme catalyses phosphoethanolamine + S-adenosyl-L-methionine = N-methylethanolamine phosphate + S-adenosyl-L-homocysteine + H(+). Its pathway is phospholipid metabolism; phosphatidylcholine biosynthesis; phosphocholine from phosphoethanolamine. Feedback inhibition by phosphatidylcholine. In terms of biological role, catalyzes the first step in the synthesis of phosphocholine by converting phosphoethanolamine into phospho-monomethylethanolamine (N-methylethanolamine phosphate). Phosphocholine is a precursor for phosphatidylcholine, a major component in membranes and a precursor itself in the production of glycoconjugates secreted by parasitic nematodes to avoid host immune responses. The polypeptide is Phosphoethanolamine N-methyltransferase 1 (Caenorhabditis elegans).